The primary structure comprises 312 residues: Acetyl-coenzyme A carboxylase carboxyl transferase subunit beta (312 aa).

Residues 24 to 293 form the CoA carboxyltransferase N-terminal domain; the sequence is LWIKCPDSGQ…PHADEVAAPP (270 aa). Residues 286–312 are disordered; sequence ADEVAAPPPPDVEGPPPAAEPVALPPA. Residues 291–312 show a composition bias toward pro residues; the sequence is APPPPDVEGPPPAAEPVALPPA.

The protein belongs to the AccD/PCCB family. As to quaternary structure, acetyl-CoA carboxylase is a heterohexamer composed of biotin carboxyl carrier protein (AccB), biotin carboxylase (AccC) and two subunits each of ACCase subunit alpha (AccA) and ACCase subunit beta (AccD).

It is found in the cytoplasm. The enzyme catalyses N(6)-carboxybiotinyl-L-lysyl-[protein] + acetyl-CoA = N(6)-biotinyl-L-lysyl-[protein] + malonyl-CoA. It participates in lipid metabolism; malonyl-CoA biosynthesis; malonyl-CoA from acetyl-CoA: step 1/1. Functionally, component of the acetyl coenzyme A carboxylase (ACC) complex. Biotin carboxylase (BC) catalyzes the carboxylation of biotin on its carrier protein (BCCP) and then the CO(2) group is transferred by the transcarboxylase to acetyl-CoA to form malonyl-CoA. The sequence is that of Acetyl-coenzyme A carboxylase carboxyl transferase subunit beta from Afipia carboxidovorans (strain ATCC 49405 / DSM 1227 / KCTC 32145 / OM5) (Oligotropha carboxidovorans).